The chain runs to 350 residues: Solute carrier family 35 member E4 (350 aa).

Positions 19-30 (GAAAGGAQAAGP) are enriched in low complexity. Residues 19 to 42 (GAAAGGAQAAGPPEWPPGSPQALR) are disordered. A run of 8 helical transmembrane segments spans residues 51 to 71 (MAALVWLLAGASMSSLNKWIF), 73 to 93 (VHGFGRPLLLSALHMLVAALA), 110 to 132 (VLLLSLTFGTSMACGNVGLRAVP), 135 to 155 (LAQLVTTTTPLFTLALSALLL), 218 to 238 (VTLLYATSLPSFCLLAGAALV), 258 to 278 (ILLSCLLSVLYNLASFSLLAL), 279 to 299 (TSALTVHVLGNLTVVGNLILS), and 312 to 332 (YVGIALTLSGMFLYHNCEFVA). Residues 125–179 (NVGLRAVPLDLAQLVTTTTPLFTLALSALLLGRRHHPLQLAAMGPLCLGAACSLA) enclose the EamA domain.

Belongs to the TPT transporter family. SLC35E subfamily.

The protein resides in the membrane. Putative transporter. This Homo sapiens (Human) protein is Solute carrier family 35 member E4 (SLC35E4).